The sequence spans 406 residues: Phosphopentomutase (406 aa).

Mn(2+) contacts are provided by aspartate 10, aspartate 305, histidine 310, aspartate 346, histidine 347, and histidine 358.

This sequence belongs to the phosphopentomutase family. It depends on Mn(2+) as a cofactor.

Its subcellular location is the cytoplasm. The catalysed reaction is 2-deoxy-alpha-D-ribose 1-phosphate = 2-deoxy-D-ribose 5-phosphate. It catalyses the reaction alpha-D-ribose 1-phosphate = D-ribose 5-phosphate. It participates in carbohydrate degradation; 2-deoxy-D-ribose 1-phosphate degradation; D-glyceraldehyde 3-phosphate and acetaldehyde from 2-deoxy-alpha-D-ribose 1-phosphate: step 1/2. In terms of biological role, isomerase that catalyzes the conversion of deoxy-ribose 1-phosphate (dRib-1-P) and ribose 1-phosphate (Rib-1-P) to deoxy-ribose 5-phosphate (dRib-5-P) and ribose 5-phosphate (Rib-5-P), respectively. The sequence is that of Phosphopentomutase from Methylobacterium radiotolerans (strain ATCC 27329 / DSM 1819 / JCM 2831 / NBRC 15690 / NCIMB 10815 / 0-1).